We begin with the raw amino-acid sequence, 512 residues long: Cytoplasmic tRNA 2-thiolation protein 2-A (512 aa).

This sequence belongs to the CTU2/NCS2 family.

Its subcellular location is the cytoplasm. Its pathway is tRNA modification; 5-methoxycarbonylmethyl-2-thiouridine-tRNA biosynthesis. Plays a central role in 2-thiolation of mcm(5)S(2)U at tRNA wobble positions of tRNA(Lys), tRNA(Glu) and tRNA(Gln). May act by forming a heterodimer with ctu1/atpbd3 that ligates sulfur from thiocarboxylated urm1 onto the uridine of tRNAs at wobble position. The polypeptide is Cytoplasmic tRNA 2-thiolation protein 2-A (ctu2-a) (Xenopus laevis (African clawed frog)).